Reading from the N-terminus, the 366-residue chain is Ribosomal RNA large subunit methyltransferase M (366 aa).

S-adenosyl-L-methionine-binding positions include Ser-188, 221–224, Asp-240, Asp-260, and Asp-277; that span reads CPGG. Residue Lys-306 is the Proton acceptor of the active site.

Belongs to the class I-like SAM-binding methyltransferase superfamily. RNA methyltransferase RlmE family. RlmM subfamily. In terms of assembly, monomer.

It is found in the cytoplasm. The enzyme catalyses cytidine(2498) in 23S rRNA + S-adenosyl-L-methionine = 2'-O-methylcytidine(2498) in 23S rRNA + S-adenosyl-L-homocysteine + H(+). In terms of biological role, catalyzes the 2'-O-methylation at nucleotide C2498 in 23S rRNA. This chain is Ribosomal RNA large subunit methyltransferase M, found in Musicola paradisiaca (strain Ech703) (Dickeya paradisiaca).